We begin with the raw amino-acid sequence, 87 residues long: MMMKFINIGYGNMVSAARIITIVSPDSAPIKRIIQDARESGKLVDATHGRRTRAVIIMDSDHVILSSVQPETVANRLYGSDDFSEEG.

Belongs to the RemA family.

The chain is Putative regulatory protein GK1166 from Geobacillus kaustophilus (strain HTA426).